Reading from the N-terminus, the 174-residue chain is Soma ferritin (174 aa).

The Ferritin-like diiron domain maps to 8 to 157 (QNYHAESEAG…DYITNLKRVG (150 aa)). Fe cation is bound by residues glutamate 25, glutamate 60, histidine 63, glutamate 105, and glutamine 139.

This sequence belongs to the ferritin family. Oligomer of 12 or 24 subunits. The functional molecule is roughly spherical and contains a central cavity into which the polymeric mineral iron core is deposited. In terms of tissue distribution, expressed in somatic tissues but not in oocytes.

The protein localises to the cytoplasm. It catalyses the reaction 4 Fe(2+) + O2 + 4 H(+) = 4 Fe(3+) + 2 H2O. Stores iron in a soluble, non-toxic, readily available form. Important for iron homeostasis. Has ferroxidase activity. Iron is taken up in the ferrous form and deposited as ferric hydroxides after oxidation. The sequence is that of Soma ferritin from Lymnaea stagnalis (Great pond snail).